A 273-amino-acid chain; its full sequence is Dermonecrotic toxin LhSicTox-alphaIA2aii (273 aa).

Residue His5 is part of the active site. Residues Glu25 and Asp27 each coordinate Mg(2+). The active-site Nucleophile is His41. 2 disulfides stabilise this stretch: Cys45–Cys51 and Cys47–Cys190. Asp85 is a Mg(2+) binding site.

It belongs to the arthropod phospholipase D family. Class II subfamily. The cofactor is Mg(2+). As to expression, expressed by the venom gland.

It is found in the secreted. The catalysed reaction is an N-(acyl)-sphingosylphosphocholine = an N-(acyl)-sphingosyl-1,3-cyclic phosphate + choline. It carries out the reaction an N-(acyl)-sphingosylphosphoethanolamine = an N-(acyl)-sphingosyl-1,3-cyclic phosphate + ethanolamine. It catalyses the reaction a 1-acyl-sn-glycero-3-phosphocholine = a 1-acyl-sn-glycero-2,3-cyclic phosphate + choline. The enzyme catalyses a 1-acyl-sn-glycero-3-phosphoethanolamine = a 1-acyl-sn-glycero-2,3-cyclic phosphate + ethanolamine. Dermonecrotic toxins cleave the phosphodiester linkage between the phosphate and headgroup of certain phospholipids (sphingolipid and lysolipid substrates), forming an alcohol (often choline) and a cyclic phosphate. This toxin acts on sphingomyelin (SM). It may also act on ceramide phosphoethanolamine (CPE), lysophosphatidylcholine (LPC) and lysophosphatidylethanolamine (LPE), but not on lysophosphatidylserine (LPS), and lysophosphatidylglycerol (LPG). It acts by transphosphatidylation, releasing exclusively cyclic phosphate products as second products. Induces dermonecrosis, hemolysis, increased vascular permeability, edema, inflammatory response, and platelet aggregation. This is Dermonecrotic toxin LhSicTox-alphaIA2aii from Loxosceles hirsuta (Recluse spider).